We begin with the raw amino-acid sequence, 804 residues long: DNA mismatch repair protein MutS (804 aa).

614-621 (GPNMAGKS) is a binding site for ATP.

Belongs to the DNA mismatch repair MutS family.

Functionally, this protein is involved in the repair of mismatches in DNA. It is possible that it carries out the mismatch recognition step. This protein has a weak ATPase activity. This is DNA mismatch repair protein MutS from Ehrlichia ruminantium (strain Gardel).